A 321-amino-acid chain; its full sequence is Lipoyl synthase (321 aa).

[4Fe-4S] cluster-binding residues include C68, C73, C79, C94, C98, C101, and S308. Positions 80–297 constitute a Radical SAM core domain; the sequence is FNHGTATFMI…KAEALAMGFT (218 aa).

This sequence belongs to the radical SAM superfamily. Lipoyl synthase family. The cofactor is [4Fe-4S] cluster.

It is found in the cytoplasm. It carries out the reaction [[Fe-S] cluster scaffold protein carrying a second [4Fe-4S](2+) cluster] + N(6)-octanoyl-L-lysyl-[protein] + 2 oxidized [2Fe-2S]-[ferredoxin] + 2 S-adenosyl-L-methionine + 4 H(+) = [[Fe-S] cluster scaffold protein] + N(6)-[(R)-dihydrolipoyl]-L-lysyl-[protein] + 4 Fe(3+) + 2 hydrogen sulfide + 2 5'-deoxyadenosine + 2 L-methionine + 2 reduced [2Fe-2S]-[ferredoxin]. It functions in the pathway protein modification; protein lipoylation via endogenous pathway; protein N(6)-(lipoyl)lysine from octanoyl-[acyl-carrier-protein]: step 2/2. Its function is as follows. Catalyzes the radical-mediated insertion of two sulfur atoms into the C-6 and C-8 positions of the octanoyl moiety bound to the lipoyl domains of lipoate-dependent enzymes, thereby converting the octanoylated domains into lipoylated derivatives. The chain is Lipoyl synthase from Escherichia fergusonii (strain ATCC 35469 / DSM 13698 / CCUG 18766 / IAM 14443 / JCM 21226 / LMG 7866 / NBRC 102419 / NCTC 12128 / CDC 0568-73).